The sequence spans 349 residues: MSSLSGKVQTVLGLVEPSKLGRTLTHEHLAMTFDCCYCPPPPCQEAISKEPIVMKNLYWIQKNAYSHKENLQLNQETEAIKEELLYFKANGGGALVENTTTGISRDTQTLKRLAEETGVHIISGAGFYVDATHSSETRAMSVEQLTDVLMNGILHGADGTSIKCGVIGEIGCSWPLTESERKVLQATAHAQAQLGCPVIIHPGRSSRAPFQIIRILQEAGADISKTVMSHLDRTILDKKELLEFAQLGCYSEYDLFGTELLHYQLGPDIDMPDDNKRIRRVRLLVEEGYEDRILVAHDIHTKTRLMKYGGHGYSHILTNVVPKMLLRGITENVLDKILIENPKQWLTFK.

Residues His-26, His-28, Glu-169, His-201, His-230, and Asp-298 each coordinate a divalent metal cation.

It belongs to the metallo-dependent hydrolases superfamily. Phosphotriesterase family. The cofactor is a divalent metal cation.

The protein resides in the cytoplasm. The protein localises to the cytosol. It catalyses the reaction N-acetyltaurine + H2O = taurine + acetate. The catalysed reaction is N-propanoyltaurine + H2O = propanoate + taurine. The enzyme catalyses N-acetyl-L-methionine + H2O = L-methionine + acetate. It carries out the reaction N-acetyl-L-isoleucine + H2O = L-isoleucine + acetate. It catalyses the reaction N-acetyl-L-leucine + H2O = L-leucine + acetate. The catalysed reaction is N-acetyl-L-valine + H2O = L-valine + acetate. Its function is as follows. N-acetyltaurine hydrolase that regulates feeding by catalyzing the hydrolysis of N-acetyltaurine into taurine and acetate. N-acetyltaurine has anorexigenic and anti-obesity effects that are dependent on GFRAL receptor and GDF15. PTER also acts on other N-acetyl amino acids (Met, Ile, Leu, Val) and N-propionyltaurine, but at lower rates. This chain is N-acetyltaurine hydrolase, found in Pongo abelii (Sumatran orangutan).